The chain runs to 530 residues: MTAEPLEDPEASSSSTHDLPEASSDNTADENSADLPGESEGPDSLPDDVPPGDIDEVLAEHDVDQTSEAKAITTEQNEEQDFIRTDTFMRQDEDLLSKQISTITEKNVDQAYMQINTVFEQDKDQASIQTATLMGQDEDQAFLQIVTSVGQNKDQASIQTATLMGQDEDQASLQIATSVGQNKDQPSMQMDTSIGQDVEPAISTDTATSAVKDESPDIPHQGQDNPEETTSLLPQDPGILQVFVGFQNPVWDRLAENNRTSRSRTVSPSDSQTQEKTLGNPNVPEGQPVLVPNADVLSNLPEHVQTSVGAADPPPSDTSGRDPEPTPTTNSAKQEAEGFKALNPGSKARSPGLTSEDSAADSGIPPDPPDPGSPGGSPPHSPDFYQVALGRNLLDPNLYRPDVENDYMRSMTSLLGCGEGSISSLTDILVWSDTATRMGVAVGILASGCSSPADRLQDEGPRLRTVASLLRSARSAFSSGVMSGTGSALHSVTHLLESVERRTMEGIRSAMRYLAHHLTSRWARTGPSGN.

Acidic residues predominate over residues 1–10; it reads MTAEPLEDPE. 4 disordered regions span residues 1–85, 207–233, 256–290, and 305–384; these read MTAE…FIRT, ATSAVKDESPDIPHQGQDNPEETTSLL, ENNRTSRSRTVSPSDSQTQEKTLGNPNVPEGQPVL, and QTSV…SPDF. 3 stretches are compositionally biased toward polar residues: residues 11–26, 222–233, and 257–280; these read ASSSSTHDLPEASSDN, GQDNPEETTSLL, and NNRTSRSRTVSPSDSQTQEKTLGN. Pro residues predominate over residues 365-381; the sequence is PPDPPDPGSPGGSPPHS. Ser468 carries the post-translational modification Phosphoserine.

Its subcellular location is the cytoplasm. This is Testis-expressed protein 44 (Tex44) from Mus musculus (Mouse).